The following is a 506-amino-acid chain: Histidine--tRNA ligase, mitochondrial (506 aa).

A mitochondrion-targeting transit peptide spans M1–S33. S67 bears the Phosphoserine mark. L-histidine is bound by residues D131–T133, R158, Q174, D178, R327, and Y331–Y332. N6-acetyllysine is present on K444.

Belongs to the class-II aminoacyl-tRNA synthetase family. As to quaternary structure, homodimer.

It localises to the mitochondrion. The catalysed reaction is tRNA(His) + L-histidine + ATP = L-histidyl-tRNA(His) + AMP + diphosphate + H(+). Mitochondrial aminoacyl-tRNA synthetase that catalyzes the ATP-dependent ligation of histidine to the 3'-end of its cognate tRNA, via the formation of an aminoacyl-adenylate intermediate (His-AMP). The chain is Histidine--tRNA ligase, mitochondrial (HARS2) from Bos taurus (Bovine).